Reading from the N-terminus, the 303-residue chain is Coenzyme PQQ synthesis protein B (303 aa).

Belongs to the PqqB family.

The protein operates within cofactor biosynthesis; pyrroloquinoline quinone biosynthesis. In terms of biological role, may be involved in the transport of PQQ or its precursor to the periplasm. This is Coenzyme PQQ synthesis protein B from Rhizobium meliloti (strain 1021) (Ensifer meliloti).